Reading from the N-terminus, the 116-residue chain is Ino eighty subunit 4 (116 aa).

The segment covering 1–15 (MSQESSVLSESQEQL) has biased composition (low complexity). 2 disordered regions span residues 1-40 (MSQE…PVLP) and 70-116 (EERQ…GLDS). Positions 84–108 (KGSDDKATRKKEPADEDPEVKQLEK) are enriched in basic and acidic residues.

Component of the chromatin-remodeling INO80 complex, at least composed of ARP4, ARP5, ARP8, RVB1, RVB2, TAF14, NHP10, IES1, IES3, IES4, IES6, ACT1, IES2, IES5 and INO80.

The protein resides in the nucleus. This Saccharomyces cerevisiae (strain ATCC 204508 / S288c) (Baker's yeast) protein is Ino eighty subunit 4 (IES4).